We begin with the raw amino-acid sequence, 76 residues long: MSKTTVIAIFMVVLVLGLVTKETQGQELCHDYMSGTELCEEDKCVAKCIWMHGTAAKGTCMPKPSKQCVCTYSCNA.

An N-terminal signal peptide occupies residues methionine 1–glycine 25. 4 disulfide bridges follow: cysteine 29–cysteine 74, cysteine 39–cysteine 60, cysteine 44–cysteine 68, and cysteine 48–cysteine 70.

It belongs to the DEFL family. In terms of tissue distribution, expressed in flower buds, but not in stems, roots or rosette leaves.

Its subcellular location is the secreted. This is Defensin-like protein 122 (LCR30) from Arabidopsis thaliana (Mouse-ear cress).